The following is a 411-amino-acid chain: Arginine deiminase (411 aa).

The active-site Amidino-cysteine intermediate is the Cys401.

It belongs to the arginine deiminase family. In terms of processing, glycosylated.

The protein localises to the cytoplasm. It carries out the reaction L-arginine + H2O = L-citrulline + NH4(+). It functions in the pathway amino-acid degradation; L-arginine degradation via ADI pathway; carbamoyl phosphate from L-arginine: step 1/2. This Streptococcus pyogenes serotype M1 protein is Arginine deiminase (arcA).